Reading from the N-terminus, the 344-residue chain is Protein RecA (344 aa).

65–72 (GPESSGKT) is an ATP binding site.

This sequence belongs to the RecA family.

It is found in the cytoplasm. Can catalyze the hydrolysis of ATP in the presence of single-stranded DNA, the ATP-dependent uptake of single-stranded DNA by duplex DNA, and the ATP-dependent hybridization of homologous single-stranded DNAs. It interacts with LexA causing its activation and leading to its autocatalytic cleavage. The protein is Protein RecA of Nitratiruptor sp. (strain SB155-2).